The sequence spans 647 residues: MPKIIELPEVLANQIAAGEVVERPASVVKELVENAIDAGSTQITIEVEESGLSKIQITDNGEGMAQADVAMSLRRHATSKIKNQGDLFRIRTLGFRGEALPSIASISHLTIVTAADGEVYGTKLVAKGGEIESQDPISTPVGTKITVENLFYNTPARLKYMKSLQAELAHIVDVVNRLSLAHPEVAFTLLNDGRQLTQTSGTGDLRQAIAGIYGLTTAKKMVEISNSDLDFEVSGYVSLPELTRANRNYITILINGRYIKNFLLNRAIFDGYGSKLMVGRFPIAVIDIQIDPYLADVNVHPTKQEVRISKEKELMALIKSAIAQSLREQDLIPDALENLAKSSTRGATRSVQTSLPLKQTNLYYDSSRNDFFVTPETVQEDIKPLVSKSESSVSLVANKQQPTVKQAKRSADDSDSEHGKLDYKNKSKLKRMLENLTNEETSTFPELEFFGQMHGTYLFAQGQGGLYIIDQHAAQERVKYEYYREKIGVVDSSLQQLLVPYLFEFSGSDYISLQEKMPLLNQVCIYLEPYGNNTFILREHPIWMKEEEIESAVYEMCDMLLLTNEVSVKTYRAELAIMMSCKRSIKANHALDDYSARDLLVQLAQCKNPYNCPHGRPVLVNFTKSDMEKMFRRIQENHTSLRDLGKY.

Residues V393–Y423 are disordered. The span at R409–Y423 shows a compositional bias: basic and acidic residues.

The protein belongs to the DNA mismatch repair MutL/HexB family.

This protein is involved in the repair of mismatches in DNA. It is required for dam-dependent methyl-directed DNA mismatch repair. May act as a 'molecular matchmaker', a protein that promotes the formation of a stable complex between two or more DNA-binding proteins in an ATP-dependent manner without itself being part of a final effector complex. The polypeptide is DNA mismatch repair protein MutL (Streptococcus thermophilus (strain CNRZ 1066)).